Reading from the N-terminus, the 379-residue chain is Succinyl-diaminopimelate desuccinylase (379 aa).

Histidine 70 serves as a coordination point for Zn(2+). Aspartate 72 is a catalytic residue. Zn(2+) is bound at residue aspartate 103. Catalysis depends on glutamate 137, which acts as the Proton acceptor. Residues glutamate 138, glutamate 166, and histidine 352 each contribute to the Zn(2+) site.

Belongs to the peptidase M20A family. DapE subfamily. In terms of assembly, homodimer. Zn(2+) serves as cofactor. The cofactor is Co(2+).

It carries out the reaction N-succinyl-(2S,6S)-2,6-diaminopimelate + H2O = (2S,6S)-2,6-diaminopimelate + succinate. Its pathway is amino-acid biosynthesis; L-lysine biosynthesis via DAP pathway; LL-2,6-diaminopimelate from (S)-tetrahydrodipicolinate (succinylase route): step 3/3. Functionally, catalyzes the hydrolysis of N-succinyl-L,L-diaminopimelic acid (SDAP), forming succinate and LL-2,6-diaminopimelate (DAP), an intermediate involved in the bacterial biosynthesis of lysine and meso-diaminopimelic acid, an essential component of bacterial cell walls. The sequence is that of Succinyl-diaminopimelate desuccinylase from Burkholderia multivorans (strain ATCC 17616 / 249).